We begin with the raw amino-acid sequence, 211 residues long: ATP phosphoribosyltransferase (211 aa).

It belongs to the ATP phosphoribosyltransferase family. Short subfamily. As to quaternary structure, heteromultimer composed of HisG and HisZ subunits.

The protein resides in the cytoplasm. The catalysed reaction is 1-(5-phospho-beta-D-ribosyl)-ATP + diphosphate = 5-phospho-alpha-D-ribose 1-diphosphate + ATP. It participates in amino-acid biosynthesis; L-histidine biosynthesis; L-histidine from 5-phospho-alpha-D-ribose 1-diphosphate: step 1/9. In terms of biological role, catalyzes the condensation of ATP and 5-phosphoribose 1-diphosphate to form N'-(5'-phosphoribosyl)-ATP (PR-ATP). Has a crucial role in the pathway because the rate of histidine biosynthesis seems to be controlled primarily by regulation of HisG enzymatic activity. The chain is ATP phosphoribosyltransferase from Rippkaea orientalis (strain PCC 8801 / RF-1) (Cyanothece sp. (strain PCC 8801)).